The sequence spans 462 residues: Cysteine--tRNA ligase (462 aa).

Residue cysteine 24 participates in Zn(2+) binding. Positions 26 to 36 (PTVYDDAHLGH) match the 'HIGH' region motif. Residues cysteine 199, histidine 224, and glutamate 228 each coordinate Zn(2+). A 'KMSKS' region motif is present at residues 256-260 (KMSKS). Position 259 (lysine 259) interacts with ATP.

It belongs to the class-I aminoacyl-tRNA synthetase family. In terms of assembly, monomer. Zn(2+) is required as a cofactor.

The protein localises to the cytoplasm. The enzyme catalyses tRNA(Cys) + L-cysteine + ATP = L-cysteinyl-tRNA(Cys) + AMP + diphosphate. The protein is Cysteine--tRNA ligase of Campylobacter jejuni subsp. jejuni serotype O:6 (strain 81116 / NCTC 11828).